The chain runs to 379 residues: Epoxyqueuosine reductase (379 aa).

The Proton donor role is filled by aspartate 139. Residues 181-213 (IPLPVDQPVEEGCGKCVACMTICPTGAIVEPYT) enclose the 4Fe-4S ferredoxin-type domain. The [4Fe-4S] cluster site is built by cysteine 193, cysteine 196, cysteine 199, cysteine 203, cysteine 219, cysteine 246, cysteine 249, and cysteine 253.

This sequence belongs to the QueG family. Monomer. Requires cob(II)alamin as cofactor. It depends on [4Fe-4S] cluster as a cofactor.

The protein resides in the cytoplasm. It catalyses the reaction epoxyqueuosine(34) in tRNA + AH2 = queuosine(34) in tRNA + A + H2O. Its pathway is tRNA modification; tRNA-queuosine biosynthesis. In terms of biological role, catalyzes the conversion of epoxyqueuosine (oQ) to queuosine (Q), which is a hypermodified base found in the wobble positions of tRNA(Asp), tRNA(Asn), tRNA(His) and tRNA(Tyr). This Escherichia coli (strain K12) protein is Epoxyqueuosine reductase.